A 144-amino-acid polypeptide reads, in one-letter code: Large ribosomal subunit protein uL13 (144 aa).

Belongs to the universal ribosomal protein uL13 family. Part of the 50S ribosomal subunit.

In terms of biological role, this protein is one of the early assembly proteins of the 50S ribosomal subunit, although it is not seen to bind rRNA by itself. It is important during the early stages of 50S assembly. In Oleidesulfovibrio alaskensis (strain ATCC BAA-1058 / DSM 17464 / G20) (Desulfovibrio alaskensis), this protein is Large ribosomal subunit protein uL13.